A 472-amino-acid polypeptide reads, in one-letter code: Eukaryotic translation initiation factor 2 subunit 3 (472 aa).

At alanine 2 the chain carries N-acetylalanine. Serine 16 is subject to Phosphoserine. The 210-residue stretch at 39–248 (QATINIGTIG…IVKKIPVPPR (210 aa)) folds into the tr-type G domain. Residues 48–55 (GHVAHGKS) form a G1 region. Position 51-56 (51-56 (AHGKST)) interacts with GTP. The segment at 76-80 (NITIK) is G2. Positions 134–137 (DCPG) are G3. GTP contacts are provided by residues 190–193 (NKID) and 225–227 (SAQ). The interval 190 to 193 (NKID) is G4. The interval 225 to 227 (SAQ) is G5. Positions 457–469 (GQIRRGVTIKPTV) are interacts with CDC123.

The protein belongs to the TRAFAC class translation factor GTPase superfamily. Classic translation factor GTPase family. EIF2G subfamily. As to quaternary structure, eukaryotic translation initiation factor 2 eIF2 is a heterotrimeric complex composed of an alpha (EIF2S1), a beta (EIF2S2) and a gamma (EIF2S3) chain. eIF2 is member of the 43S pre-initiation complex (43S PIC). Interacts (via C-terminus) with CDC123; the interaction is direct.

The protein resides in the cytoplasm. The protein localises to the cytosol. The catalysed reaction is GTP + H2O = GDP + phosphate + H(+). In terms of biological role, member of the eIF2 complex that functions in the early steps of protein synthesis by forming a ternary complex with GTP and initiator tRNA. This complex binds to a 40S ribosomal subunit, followed by mRNA binding to form the 43S pre-initiation complex (43S PIC). Junction of the 60S ribosomal subunit to form the 80S initiation complex is preceded by hydrolysis of the GTP bound to eIF2 and release of an eIF2-GDP binary complex. In order for eIF2 to recycle and catalyze another round of initiation, the GDP bound to eIF2 must exchange with GTP by way of a reaction catalyzed by eIF-2B. The protein is Eukaryotic translation initiation factor 2 subunit 3 (EIF2S3) of Sus scrofa (Pig).